Reading from the N-terminus, the 429-residue chain is Enolase (429 aa).

Gln163 is a binding site for (2R)-2-phosphoglycerate. Catalysis depends on Glu205, which acts as the Proton donor. 3 residues coordinate Mg(2+): Asp242, Glu287, and Asp314. Positions 339, 368, 369, and 390 each coordinate (2R)-2-phosphoglycerate. The active-site Proton acceptor is Lys339.

This sequence belongs to the enolase family. In terms of assembly, homooctamer. Mg(2+) serves as cofactor.

Its subcellular location is the cytoplasm. The protein localises to the secreted. It localises to the cell surface. It catalyses the reaction (2R)-2-phosphoglycerate = phosphoenolpyruvate + H2O. It participates in carbohydrate degradation; glycolysis; pyruvate from D-glyceraldehyde 3-phosphate: step 4/5. Functionally, catalyzes the reversible conversion of 2-phosphoglycerate (2-PG) into phosphoenolpyruvate (PEP). It is essential for the degradation of carbohydrates via glycolysis. In Zymomonas mobilis subsp. mobilis (strain ATCC 31821 / ZM4 / CP4), this protein is Enolase.